Reading from the N-terminus, the 448-residue chain is Microtubule-associated protein tau (448 aa).

Over residues 1–16 (MAEPRQEFDVMEDHAQ) the composition is skewed to basic and acidic residues. The tract at residues 1–264 (MAEPRQEFDV…GPMPDLKNVK (264 aa)) is disordered. An N-acetylalanine modification is found at alanine 2. A Phosphotyrosine modification is found at tyrosine 19. Lysine 33 is covalently cross-linked (Glycyl lysine isopeptide (Lys-Gly) (interchain with G-Cter in ubiquitin)). Residues serine 35 and serine 50 each carry the phosphoserine modification. Positions 50–60 (SETSDAKSTPT) are enriched in polar residues. Phosphothreonine is present on residues threonine 58 and threonine 60. The span at 71–89 (EGAPGEQAAAQAPAEIPEG) shows a compositional bias: low complexity. Threonine 100 bears the Phosphothreonine mark. The span at 119-135 (KGKDGTGPDDKKTKGAD) shows a compositional bias: basic and acidic residues. Residue threonine 144 is modified to Phosphothreonine. The residue at position 146 (arginine 146) is an Omega-N-methylarginine. At lysine 154 the chain carries N6,N6-dimethyllysine; alternate. Lysine 154 bears the N6-acetyllysine; alternate mark. A phosphothreonine mark is found at threonine 160, threonine 166, threonine 167, and threonine 172. A compositionally biased stretch (low complexity) spans 163 to 176 (PAKTTPTPKTSPAT). Residues 189–200 (KSERGESGKSGD) are compositionally biased toward basic and acidic residues. Phosphoserine is present on residues serine 198 and serine 202. Residues 201-221 (RSGYSSPGSPGTPGSRSRTPS) show a composition bias toward low complexity. At tyrosine 204 the chain carries Phosphotyrosine. 3 positions are modified to phosphoserine: serine 205, serine 206, and serine 209. Residues threonine 212 and threonine 219 each carry the phosphothreonine modification. Serine 221 bears the Phosphoserine mark. A Phosphothreonine modification is found at threonine 224. Lysine 232 is modified (N6-acetyllysine). Threonine 238 carries the post-translational modification Phosphothreonine. Phosphoserine occurs at positions 242 and 244. Tau/MAP repeat units lie at residues 251–281 (QAAP…GGGK), 282–312 (VQII…GGGS), 313–343 (VQIV…GGGQ), and 344–375 (VEVK…GGGN). A Glycyl lysine isopeptide (Lys-Gly) (interchain with G-Cter in ubiquitin) cross-link involves residue lysine 261. Lysine 266 bears the N6-acetyllysine; alternate mark. Lysine 266 bears the N6-methyllysine; alternate mark. Lysine 266 participates in a covalent cross-link: Glycyl lysine isopeptide (Lys-Gly) (interchain with G-Cter in ubiquitin); alternate. Serine 269 bears the Phosphoserine mark. Lysine 274 participates in a covalent cross-link: Glycyl lysine isopeptide (Lys-Gly) (interchain with G-Cter in ubiquitin). Residue lysine 288 is modified to N6-acetyllysine; alternate. Lysine 288 participates in a covalent cross-link: Glycyl lysine isopeptide (Lys-Gly) (interchain with G-Cter in ubiquitin); alternate. Phosphoserine is present on residues serine 292 and serine 296. Lysine 297 bears the N6-acetyllysine mark. A disulfide bridge links cysteine 298 with cysteine 329. Serine 300 carries the post-translational modification Phosphoserine. Lysine 305 is modified (N6-acetyllysine; alternate). Residue lysine 305 forms a Glycyl lysine isopeptide (Lys-Gly) (interchain with G-Cter in ubiquitin); alternate linkage. At serine 312 the chain carries Phosphoserine. An N6,N6-dimethyllysine; alternate modification is found at lysine 318. N6-acetyllysine; alternate is present on residues lysine 318, lysine 324, and lysine 328. Residues lysine 318, lysine 324, and lysine 328 each participate in a glycyl lysine isopeptide (Lys-Gly) (interchain with G-Cter in ubiquitin); alternate cross-link. Serine 331 carries the phosphoserine modification. N6-acetyllysine; alternate is present on residues lysine 338, lysine 350, and lysine 354. Residues lysine 338, lysine 350, and lysine 354 each participate in a glycyl lysine isopeptide (Lys-Gly) (interchain with G-Cter in ubiquitin); alternate cross-link. Residue arginine 356 is modified to Omega-N-methylarginine. Serine 359 carries the phosphoserine modification. Lysine 360 is covalently cross-linked (Glycyl lysine isopeptide (Lys-Gly) (interchain with G-Cter in ubiquitin)). At serine 363 the chain carries Phosphoserine. Lysine 376 carries the post-translational modification N6-acetyllysine; alternate. Residue lysine 376 forms a Glycyl lysine isopeptide (Lys-Gly) (interchain with G-Cter in ubiquitin); alternate linkage. Residue lysine 382 forms a Glycyl lysine isopeptide (Lys-Gly) (interchain with G-Cter in ubiquitin) linkage. Lysine 392 is modified (N6-acetyllysine; alternate). A Glycyl lysine isopeptide (Lys-Gly) (interchain with G-Cter in ubiquitin); alternate cross-link involves residue lysine 392. Phosphotyrosine is present on tyrosine 401. Serine 403 and serine 407 each carry phosphoserine. Positions 405-424 (VVSGDTSPRHLSNVSSTGSI) are disordered. Polar residues predominate over residues 408–423 (GDTSPRHLSNVSSTGS). Threonine 410 carries the phosphothreonine modification. 4 positions are modified to phosphoserine: serine 411, serine 416, serine 423, and serine 429. Threonine 434 is modified (phosphothreonine).

In terms of assembly, interacts with MARK1, MARK2, MARK3 and MARK4. Interacts with SQSTM1 when polyubiquitinated. Interacts with PSMC2 through SQSTM1. Interacts with FKBP4. Binds to CSNK1D. Interacts with SGK1. Interacts with PIN1. Interacts with LRRK2. Interacts with LRP1, leading to endocytosis; this interaction is reduced in the presence of LRPAP1/RAP. Polyubiquitinated. Requires functional TRAF6 and may provoke SQSTM1-dependent degradation by the proteasome. In terms of processing, phosphorylation at various serine and threonine residues in S-P or T-P motifs by proline-directed protein kinases (PDPK1, CDK1, CDK5, GSK3, MAPK) (a few sites per protein in interphase, more in mitosis), and at serine residues in K-X-G-S motifs by MAP/microtubule affinity-regulating kinase (MARK1, MARK2, MARK3, MARK4), causing detachment from microtubules, and their disassembly. Phosphorylation at Ser-269 by BRSK1 and BRSK2 in neurons affects ability to bind microtubules and plays a role in neuron polarization. Phosphorylated by PHK. Dephosphorylation at several serine and threonine residues by the serine/threonine phosphatase PPP5C. Post-translationally, O-glycosylated; contains at least 4 GlcNAc. Site-specific or stoichiometric changes in glycosylation may modulate tau function and also play a role in PHF's formation. Expressed in neurons.

It is found in the cytoplasm. Its subcellular location is the cytosol. The protein localises to the cell membrane. The protein resides in the cytoskeleton. It localises to the cell projection. It is found in the axon. Its subcellular location is the dendrite. The protein localises to the secreted. Its function is as follows. Promotes microtubule assembly and stability, and might be involved in the establishment and maintenance of neuronal polarity. The C-terminus binds axonal microtubules while the N-terminus binds neural plasma membrane components, suggesting that tau functions as a linker protein between both. Axonal polarity is predetermined by tau localization (in the neuronal cell) in the domain of the cell body defined by the centrosome. The short isoforms allow plasticity of the cytoskeleton whereas the longer isoforms may preferentially play a role in its stabilization. The chain is Microtubule-associated protein tau (MAPT) from Bos taurus (Bovine).